A 476-amino-acid chain; its full sequence is ATP synthase subunit beta (476 aa).

154-161 (GGAGVGKT) lines the ATP pocket.

It belongs to the ATPase alpha/beta chains family. As to quaternary structure, F-type ATPases have 2 components, CF(1) - the catalytic core - and CF(0) - the membrane proton channel. CF(1) has five subunits: alpha(3), beta(3), gamma(1), delta(1), epsilon(1). CF(0) has four main subunits: a(1), b(1), b'(1) and c(9-12).

Its subcellular location is the cell inner membrane. The enzyme catalyses ATP + H2O + 4 H(+)(in) = ADP + phosphate + 5 H(+)(out). In terms of biological role, produces ATP from ADP in the presence of a proton gradient across the membrane. The catalytic sites are hosted primarily by the beta subunits. The chain is ATP synthase subunit beta from Rhodopseudomonas palustris (strain BisB5).